The primary structure comprises 265 residues: Dimethylsulfide dehydrogenase subunit gamma (265 aa).

Residues Met1 to Ala25 form the signal peptide. Heme b is bound by residues His81 and Met147.

As to quaternary structure, heterotrimer of alpha, beta and gamma subunits. The cofactor is heme b.

Its subcellular location is the periplasm. Its function is as follows. May transfer electrons to the iron-sulfur centers of DdhB. This is Dimethylsulfide dehydrogenase subunit gamma (ddhC) from Rhodovulum sulfidophilum (Rhodobacter sulfidophilus).